Reading from the N-terminus, the 535-residue chain is Dimethylaniline monooxygenase [N-oxide-forming] 2 (535 aa).

A2 bears the N-acetylalanine mark. Residues 9 to 13 (GAGVS), E32, 40 to 41 (LW), and 61 to 62 (NT) contribute to the FAD site. Residues 60 to 61 (TN) and 195 to 198 (SAAD) each bind NADP(+). Residue K492 forms a Glycyl lysine isopeptide (Lys-Gly) (interchain with G-Cter in SUMO) linkage. The helical transmembrane segment at 510–530 (APVSFLLKILGLLAVVLAFFF) threads the bilayer.

Belongs to the FMO family. FAD serves as cofactor. Requires Mg(2+) as cofactor.

It localises to the microsome membrane. Its subcellular location is the endoplasmic reticulum membrane. Functionally, catalyzes the oxidative metabolism of numerous xenobiotics, including mainly therapeutic drugs and insecticides that contain a soft nucleophile, most commonly nitrogen and sulfur and participates to their bioactivation. Catalyzes the S-oxygenation of the prodrug ethionamide (ETA) to the S-oxide (ETASO), the first step in its bioactivation following by the second oxygenation to the sulfinic acid but to a lesser extend. This chain is Dimethylaniline monooxygenase [N-oxide-forming] 2, found in Mus musculus (Mouse).